The following is a 614-amino-acid chain: Bifunctional 3'-phosphoadenosine 5'-phosphosulfate synthase 2 (614 aa).

An adenylyl-sulfate kinase region spans residues 1-215 (MSGIKKQKTE…VVELLQEQNI (215 aa)). 52 to 57 (GAGKTT) contributes to the ATP binding site. Adenosine 5'-phosphosulfate is bound by residues 79–82 (DNVR), Phe-91, 96–99 (REEN), 122–123 (IS), Lys-161, and 174–175 (GF). Residues Ser-197, 409-412 (QLRN), 511-515 (GRDPA), and Ala-553 contribute to the ATP site. The segment at 224-614 (IHELFVPENK…TDYYRSLEKN (391 aa)) is sulfate adenylyltransferase.

In the N-terminal section; belongs to the APS kinase family. This sequence in the C-terminal section; belongs to the sulfate adenylyltransferase family. Expressed in cartilage and adrenal gland.

The enzyme catalyses sulfate + ATP + H(+) = adenosine 5'-phosphosulfate + diphosphate. It carries out the reaction adenosine 5'-phosphosulfate + ATP = 3'-phosphoadenylyl sulfate + ADP + H(+). It participates in sulfur metabolism; sulfate assimilation. Bifunctional enzyme with both ATP sulfurylase and APS kinase activity, which mediates two steps in the sulfate activation pathway. The first step is the transfer of a sulfate group to ATP to yield adenosine 5'-phosphosulfate (APS), and the second step is the transfer of a phosphate group from ATP to APS yielding 3'-phosphoadenylylsulfate/PAPS, the activated sulfate donor used by sulfotransferases. In mammals, PAPS is the sole source of sulfate while APS appears to only be an intermediate in the sulfate-activation pathway. Plays indirectly an important role in skeletogenesis during postnatal growth. The sequence is that of Bifunctional 3'-phosphoadenosine 5'-phosphosulfate synthase 2 (PAPSS2) from Homo sapiens (Human).